The following is a 245-amino-acid chain: Nicotinamide/nicotinic acid mononucleotide adenylyltransferase 3 (245 aa).

Ser14 and Phe15 together coordinate NAD(+). Residues His22 and Lys56 each contribute to the ATP site. The NAD(+) site is built by Trp90, Thr93, Gly134, and Asp136. ATP is bound at residue Lys139. Residues Leu146, Trp147, Arg166, and Asn197 each coordinate NAD(+). 202–205 (TYVR) provides a ligand contact to ATP.

This sequence belongs to the eukaryotic NMN adenylyltransferase family. In terms of assembly, homotetramer. It depends on Mg(2+) as a cofactor.

The protein localises to the mitochondrion. The catalysed reaction is beta-nicotinamide D-ribonucleotide + ATP + H(+) = diphosphate + NAD(+). It catalyses the reaction nicotinate beta-D-ribonucleotide + ATP + H(+) = deamido-NAD(+) + diphosphate. It participates in cofactor biosynthesis; NAD(+) biosynthesis; NAD(+) from nicotinamide D-ribonucleotide: step 1/1. Its pathway is cofactor biosynthesis; NAD(+) biosynthesis; deamido-NAD(+) from nicotinate D-ribonucleotide: step 1/1. Activity is strongly inhibited by galotannin. Inhibited by P1-(adenosine-5')-P4-(nicotinic-acid-riboside-5')-tetraphosphate (Nap4AD). Its function is as follows. Catalyzes the formation of NAD(+) from nicotinamide mononucleotide (NMN) and ATP. Can also use the deamidated form; nicotinic acid mononucleotide (NaMN) as substrate with the same efficiency. Can use triazofurin monophosphate (TrMP) as substrate. Can also use GTP and ITP as nucleotide donors. Also catalyzes the reverse reaction, i.e. the pyrophosphorolytic cleavage of NAD(+). For the pyrophosphorolytic activity, can use NAD(+), NADH, NaAD, nicotinic acid adenine dinucleotide phosphate (NHD), nicotinamide guanine dinucleotide (NGD) as substrates. Fails to cleave phosphorylated dinucleotides NADP(+), NADPH and NaADP(+). Protects against axonal degeneration following injury. May be involved in the maintenance of axonal integrity. Also functions as a stress-response chaperone protein that prevents toxic aggregation of proteins; this function may be independent of its NAD(+) synthesis activity. The chain is Nicotinamide/nicotinic acid mononucleotide adenylyltransferase 3 from Mus musculus (Mouse).